A 108-amino-acid chain; its full sequence is Small proline-rich protein 5 (108 aa).

Positions 1–13 (MSQQKQKQCAPPQ) are enriched in low complexity. Disordered regions lie at residues 1–24 (MSQQ…QRCP) and 73–108 (PPPQ…SKQK). Composition is skewed to pro residues over residues 14-24 (QCCPPPQQRCP) and 73-100 (PPPQ…PPPQ).

Its function is as follows. Positively regulates keratinocyte differentiation by inducing genes associated with epidermal differentiation. The sequence is that of Small proline-rich protein 5 from Homo sapiens (Human).